The following is an 89-amino-acid chain: Rho beta-crystallin (89 aa).

His-31 lines the substrate pocket.

Belongs to the aldo/keto reductase family. As to quaternary structure, monomer.

The sequence is that of Rho beta-crystallin from Lepidodactylus lugubris (Mourning gecko).